The following is a 214-amino-acid chain: Pyridoxine/pyridoxamine 5'-phosphate oxidase (214 aa).

Substrate contacts are provided by residues 8–11 and Lys66; that span reads RINY. Residues 61 to 66, 76 to 77, Arg82, Lys83, and Gln105 contribute to the FMN site; these read RIVLIK and FT. 3 residues coordinate substrate: Tyr123, Arg127, and Ser131. FMN-binding positions include 140-141 and Trp184; that span reads QS. 190–192 is a binding site for substrate; the sequence is RLH. An FMN-binding site is contributed by Arg194.

This sequence belongs to the pyridoxamine 5'-phosphate oxidase family. As to quaternary structure, homodimer. It depends on FMN as a cofactor.

The catalysed reaction is pyridoxamine 5'-phosphate + O2 + H2O = pyridoxal 5'-phosphate + H2O2 + NH4(+). It carries out the reaction pyridoxine 5'-phosphate + O2 = pyridoxal 5'-phosphate + H2O2. It functions in the pathway cofactor metabolism; pyridoxal 5'-phosphate salvage; pyridoxal 5'-phosphate from pyridoxamine 5'-phosphate: step 1/1. The protein operates within cofactor metabolism; pyridoxal 5'-phosphate salvage; pyridoxal 5'-phosphate from pyridoxine 5'-phosphate: step 1/1. Its function is as follows. Catalyzes the oxidation of either pyridoxine 5'-phosphate (PNP) or pyridoxamine 5'-phosphate (PMP) into pyridoxal 5'-phosphate (PLP). In Burkholderia lata (strain ATCC 17760 / DSM 23089 / LMG 22485 / NCIMB 9086 / R18194 / 383), this protein is Pyridoxine/pyridoxamine 5'-phosphate oxidase.